The primary structure comprises 915 residues: Scaffold attachment factor B1 (915 aa).

A compositionally biased stretch (low complexity) spans 1-24; sequence MAETLSGLGDSGAAGAAALSSASS. The interval 1-33 is disordered; it reads MAETLSGLGDSGAAGAAALSSASSETGTRRLSD. Ala-2 is subject to N-acetylalanine. 2 positions are modified to phosphoserine: Ser-24 and Ser-55. Residues 31 to 65 enclose the SAP domain; it reads LSDLRVIDLRAELRKRNVDSSGNKSVLMERLKKAI. Residues 64–118 form a disordered region; it reads AIEDEGGNPDEIEITSEGNKKTSKRSSKGRKPEEEGVEDNGLEENSGDGQEDVET. A compositionally biased stretch (acidic residues) spans 67–77; that stretch reads DEGGNPDEIEI. Phosphoserine is present on Ser-79. Over residues 98-118 the composition is skewed to acidic residues; sequence EGVEDNGLEENSGDGQEDVET. Residues Lys-172 and Lys-186 each participate in a glycyl lysine isopeptide (Lys-Gly) (interchain with G-Cter in SUMO2) cross-link. Position 188 is a phosphothreonine (Thr-188). Residues Ser-195, Ser-197, and Ser-209 each carry the phosphoserine modification. Residues 221-407 form a disordered region; that stretch reads LGETCKSEPV…EKGRSSCGRN (187 aa). The segment covering 225–234 has biased composition (basic and acidic residues); it reads CKSEPVKEES. Lys-231 participates in a covalent cross-link: Glycyl lysine isopeptide (Lys-Gly) (interchain with G-Cter in SUMO). Over residues 275 to 286 the composition is skewed to polar residues; sequence SESTAHAQSSKA. Residues 293-309 show a composition bias toward basic and acidic residues; that stretch reads VKREPAEQPGDGERTDC. Lys-294 participates in a covalent cross-link: Glycyl lysine isopeptide (Lys-Gly) (interchain with G-Cter in SUMO). Residues 319-330 are compositionally biased toward low complexity; the sequence is EQSSAASELAEA. A compositionally biased stretch (basic and acidic residues) spans 346–359; it reads EARDSKEDGRKFDF. A compositionally biased stretch (polar residues) spans 371-383; that stretch reads ESSTSEGADQKMS. Residue Lys-381 forms a Glycyl lysine isopeptide (Lys-Gly) (interchain with G-Cter in SUMO2) linkage. Ser-383 and Ser-384 each carry phosphoserine. Over residues 390-401 the composition is skewed to basic and acidic residues; that stretch reads DTKRLSKEEKGR. Lys-392 participates in a covalent cross-link: Glycyl lysine isopeptide (Lys-Gly) (interchain with G-Cter in SUMO2). The 79-residue stretch at 406 to 484 folds into the RRM domain; it reads RNFWVSGLSS…KMISVEKAKN (79 aa). Ser-415 carries the post-translational modification Phosphoserine. 2 stretches are compositionally biased toward basic and acidic residues: residues 477 to 551 and 559 to 570; these read ISVE…ERSR and GTERTVVMDKSK. Disordered regions lie at residues 477–641, 671–708, and 749–915; these read ISVE…EREE, RERMHVEHERRREQERIHREREELRRQQELRYEQERRP, and FDHR…TRRY. Residues Lys-483, Lys-514, Lys-543, and Lys-570 each participate in a glycyl lysine isopeptide (Lys-Gly) (interchain with G-Cter in SUMO2) cross-link. Positions 528 to 792 are interaction with POLR2A. Interaction with SFRS1; SFRS9 and SFRS10; sequence GDDGSGEKSK…RHGGPERHGR (265 aa). A Glycyl lysine isopeptide (Lys-Gly) (interchain with G-Cter in SUMO1); alternate cross-link involves residue Lys-578. Lys-578 is covalently cross-linked (Glycyl lysine isopeptide (Lys-Gly) (interchain with G-Cter in SUMO2); alternate). A phosphoserine mark is found at Ser-580, Ser-582, Ser-601, and Ser-604. Residues 581 to 641 show a composition bias toward basic and acidic residues; it reads GSKERASKSQ…RMQAQWEREE (61 aa). The Nuclear localization signal motif lies at 599–616; the sequence is KRSVVSFDKVKEPRKSRD. The interval 599–915 is interaction with SAFB2; the sequence is KRSVVSFDKV…PSDARFTRRY (317 aa). N6-acetyllysine is present on Lys-607. Basic and acidic residues predominate over residues 749–796; it reads FDHRDRGRYPDHSVDRREGSRSMMGEREGQHYPERHGGPERHGRDSRD. Arg-811 is modified (omega-N-methylarginine). Composition is skewed to basic and acidic residues over residues 817-832 and 841-851; these read PRRDWGDHGRREDDRS and MMDRDHKRWQG. Lys-847 is covalently cross-linked (Glycyl lysine isopeptide (Lys-Gly) (interchain with G-Cter in SUMO2)). An asymmetric dimethylarginine mark is found at Arg-868, Arg-874, and Arg-884. Positions 892 to 901 are enriched in gly residues; that stretch reads GMQGGFGGQS. A compositionally biased stretch (basic and acidic residues) spans 905–915; it reads RPSDARFTRRY.

As to quaternary structure, monomer and homodimer. Forms heterodimers with SAFB2. Interacts with KHDRBS3. Interacts with CLK2. Interacts with POLR2A, SRSF1/ASF, SRSF9/SRp30c and SFSF10/TRA2B. Interacts with isoform 1 and isoform 2 of SRPK1 and inhibits its activity. Interacts with RBMX. Interacts with FUS. Interacts with ZBED4. Post-translationally, sumoylated by PIAS1 with SUMO1 and SUMO2/3, desumoylated by SENP1. Sumoylation is required for transcriptional repressor activity. As to expression, ubiquitous. Expressed at high levels in the CNS and at low levels in the liver. Expressed in a wide number of breast cancer cell lines.

The protein localises to the nucleus. In terms of biological role, binds to scaffold/matrix attachment region (S/MAR) DNA and forms a molecular assembly point to allow the formation of a 'transcriptosomal' complex (consisting of SR proteins and RNA polymerase II) coupling transcription and RNA processing. Functions as an estrogen receptor corepressor and can also bind to the HSP27 promoter and decrease its transcription. Thereby acts as a negative regulator of cell proliferation. When associated with RBMX, binds to and stimulates transcription from the SREBF1 promoter. The polypeptide is Scaffold attachment factor B1 (SAFB) (Homo sapiens (Human)).